The following is a 271-amino-acid chain: Cytosolic Fe-S cluster assembly factor NUBP2 (271 aa).

N-acetylmethionine is present on Met-1. 22 to 29 (GKGGVGKS) is an ATP binding site. [4Fe-4S] cluster-binding residues include Cys-196 and Cys-199.

This sequence belongs to the Mrp/NBP35 ATP-binding proteins family. NUBP2/CFD1 subfamily. In terms of assembly, heterotetramer of 2 NUBP1 and 2 NUBP2 chains. Interacts with KIFC1. Interacts with NUBP1. Requires [4Fe-4S] cluster as cofactor.

Its subcellular location is the nucleus. The protein resides in the cytoplasm. It localises to the cytoskeleton. It is found in the microtubule organizing center. The protein localises to the centrosome. Its subcellular location is the cilium axoneme. The protein resides in the centriole. Component of the cytosolic iron-sulfur (Fe/S) protein assembly (CIA) machinery. Required for maturation of extramitochondrial Fe-S proteins. The NUBP1-NUBP2 heterotetramer forms a Fe-S scaffold complex, mediating the de novo assembly of an Fe-S cluster and its transfer to target apoproteins. Negatively regulates cilium formation and structure. The sequence is that of Cytosolic Fe-S cluster assembly factor NUBP2 from Bos taurus (Bovine).